Reading from the N-terminus, the 180-residue chain is Ribosome maturation factor RimM (180 aa).

In terms of domain architecture, PRC barrel spans 97 to 176; it reads EGEFFYCDLI…KITTNNAKTL (80 aa).

It belongs to the RimM family. In terms of assembly, binds ribosomal protein uS19.

Its subcellular location is the cytoplasm. Functionally, an accessory protein needed during the final step in the assembly of 30S ribosomal subunit, possibly for assembly of the head region. Essential for efficient processing of 16S rRNA. May be needed both before and after RbfA during the maturation of 16S rRNA. It has affinity for free ribosomal 30S subunits but not for 70S ribosomes. The chain is Ribosome maturation factor RimM from Helicobacter acinonychis (strain Sheeba).